The chain runs to 86 residues: Centromere protein W (86 aa).

It belongs to the CENP-W/WIP1 family. As to quaternary structure, heterodimer with CENPT; this dimer coassembles with CENPS-CENPX heterodimers at centromeres to form the tetrameric CENP-T-W-S-X complex, which is a subcomplex of the large constitutive centromere-associated network (CCAN, also known as the interphase centromere complex or ICEN). Interacts with NPM1.

The protein localises to the nucleus. It localises to the chromosome. Its subcellular location is the centromere. It is found in the kinetochore. The protein resides in the nucleus matrix. The protein localises to the nucleolus. Functionally, component of the CENPA-NAC (nucleosome-associated) complex, a complex that plays a central role in assembly of kinetochore proteins, mitotic progression and chromosome segregation. The CENPA-NAC complex recruits the CENPA-CAD (nucleosome distal) complex and may be involved in incorporation of newly synthesized CENPA into centromeres. Part of a nucleosome-associated complex that binds specifically to histone H3-containing nucleosomes at the centromere, as opposed to nucleosomes containing CENPA. Component of the heterotetrameric CENP-T-W-S-X complex that binds and supercoils DNA, and plays an important role in kinetochore assembly. CENPW has a fundamental role in kinetochore assembly and function. It is one of the inner kinetochore proteins, with most further proteins binding downstream. Required for normal chromosome organization and normal progress through mitosis. The chain is Centromere protein W (Cenpw) from Mus musculus (Mouse).